A 183-amino-acid chain; its full sequence is Thymidine kinase (183 aa).

11–18 (GPMFSGKT) contributes to the ATP binding site. Residue glutamate 89 is the Proton acceptor of the active site. Position 119 (phenylalanine 119) interacts with substrate. Cysteine 144 and cysteine 147 together coordinate Zn(2+). Substrate is bound at residue 163 to 167 (VMDIG). 2 residues coordinate Zn(2+): cysteine 176 and cysteine 179.

This sequence belongs to the thymidine kinase family.

It carries out the reaction thymidine + ATP = dTMP + ADP + H(+). The polypeptide is Thymidine kinase (TK) (Vertebrata (FPV)).